The primary structure comprises 268 residues: Ribosomal RNA small subunit methyltransferase A (268 aa).

N16, L18, G43, E64, D89, and N110 together coordinate S-adenosyl-L-methionine.

This sequence belongs to the class I-like SAM-binding methyltransferase superfamily. rRNA adenine N(6)-methyltransferase family. RsmA subfamily.

It is found in the cytoplasm. It carries out the reaction adenosine(1518)/adenosine(1519) in 16S rRNA + 4 S-adenosyl-L-methionine = N(6)-dimethyladenosine(1518)/N(6)-dimethyladenosine(1519) in 16S rRNA + 4 S-adenosyl-L-homocysteine + 4 H(+). Specifically dimethylates two adjacent adenosines (A1518 and A1519) in the loop of a conserved hairpin near the 3'-end of 16S rRNA in the 30S particle. May play a critical role in biogenesis of 30S subunits. The sequence is that of Ribosomal RNA small subunit methyltransferase A from Pseudomonas syringae pv. tomato (strain ATCC BAA-871 / DC3000).